Reading from the N-terminus, the 620-residue chain is Chaperone protein HscA homolog (620 aa).

This sequence belongs to the heat shock protein 70 family.

Its function is as follows. Chaperone involved in the maturation of iron-sulfur cluster-containing proteins. Has a low intrinsic ATPase activity which is markedly stimulated by HscB. The chain is Chaperone protein HscA homolog from Bordetella pertussis (strain Tohama I / ATCC BAA-589 / NCTC 13251).